A 346-amino-acid chain; its full sequence is NADH-ubiquinone oxidoreductase chain 2 (346 aa).

11 helical membrane passes run 1–21 (MNPH…TITI), 25–45 (HWVL…PLIS), 60–80 (FLTQ…NAWA), 95–115 (CLLL…HFWF), 124–144 (LMTA…LLLM), 149–169 (LNPA…GWMG), 178–195 (ILAF…IILV), 200–219 (LALL…FMAL), 242–262 (ATLM…GFMP), 274–294 (EMTP…FFYL), and 326–346 (AILA…HAIV).

This sequence belongs to the complex I subunit 2 family.

The protein localises to the mitochondrion inner membrane. The enzyme catalyses a ubiquinone + NADH + 5 H(+)(in) = a ubiquinol + NAD(+) + 4 H(+)(out). Core subunit of the mitochondrial membrane respiratory chain NADH dehydrogenase (Complex I) that is believed to belong to the minimal assembly required for catalysis. Complex I functions in the transfer of electrons from NADH to the respiratory chain. The immediate electron acceptor for the enzyme is believed to be ubiquinone. This chain is NADH-ubiquinone oxidoreductase chain 2 (MT-ND2), found in Sibirionetta formosa (Baikal teal).